Reading from the N-terminus, the 978-residue chain is Tyrosine-protein kinase transforming protein fms (978 aa).

Residues 1–543 are Extracellular-facing; sequence RMPSGPGHYG…IGAHTPLPDE (543 aa). Ig-like C2-type domains lie at 55 to 134, 141 to 231, 236 to 331, 333 to 431, and 434 to 533; these read PVIQ…IHLY, PWKV…KVQK, PATL…RVVE, AYSN…LTLR, and PEVR…WPIS. A disulfide bridge links C76 with C118. N79, N107, N128, N187, N309, N320, N336, N369, N444, N511, and N524 each carry an N-linked (GlcNAc...) asparagine; by host glycan. 2 cysteine pairs are disulfide-bonded: C161–C211 and C258–C312. C451 and C516 are oxidised to a cystine. A helical transmembrane segment spans residues 544–568; that stretch reads LLFTPVLLTCMSIMALLLLLLLLLL. Residues 569–978 are Cytoplasmic-facing; that stretch reads YKYKQKPKYQ…PWQRTPPVAR (410 aa). In terms of domain architecture, Protein kinase spans 613–942; sequence LQFGKTLGTG…PTFQQICSLL (330 aa). ATP contacts are provided by residues 619–627 and K647; that span reads LGTGAFGKV. The active-site Proton acceptor is the D810. Y841 carries the post-translational modification Phosphotyrosine; by autocatalysis. The interval 952–978 is disordered; sequence VPNYTNLPSSSSSRLLRPWQRTPPVAR. Positions 958–969 are enriched in low complexity; the sequence is LPSSSSSRLLRP. T973 is modified (phosphothreonine).

It belongs to the protein kinase superfamily. Tyr protein kinase family. CSF-1/PDGF receptor subfamily.

It localises to the membrane. It catalyses the reaction L-tyrosyl-[protein] + ATP = O-phospho-L-tyrosyl-[protein] + ADP + H(+). Truncated version of the receptor for colony-stimulating factor 1 (CSF-1). In Felidae (cat family), this protein is Tyrosine-protein kinase transforming protein fms (V-FMS).